The primary structure comprises 275 residues: Large ribosomal subunit protein uL2 (275 aa).

The tract at residues 223 to 275 is disordered; it reads VVMNPVDHPHGGGEGKSSGGRHPVSPWGMPTKGYKTRKNKGTDQYIVRRRNKK.

This sequence belongs to the universal ribosomal protein uL2 family. As to quaternary structure, part of the 50S ribosomal subunit. Forms a bridge to the 30S subunit in the 70S ribosome.

One of the primary rRNA binding proteins. Required for association of the 30S and 50S subunits to form the 70S ribosome, for tRNA binding and peptide bond formation. It has been suggested to have peptidyltransferase activity; this is somewhat controversial. Makes several contacts with the 16S rRNA in the 70S ribosome. This Psychromonas ingrahamii (strain DSM 17664 / CCUG 51855 / 37) protein is Large ribosomal subunit protein uL2.